The chain runs to 212 residues: Small ribosomal subunit protein uS5 (212 aa).

Residues 48–111 (LEDEVLDINM…DIAKLNIIDV (64 aa)) enclose the S5 DRBM domain.

The protein belongs to the universal ribosomal protein uS5 family. In terms of assembly, part of the 30S ribosomal subunit. Contacts protein S4.

With S4 and S12 plays an important role in translational accuracy. This is Small ribosomal subunit protein uS5 from Haloarcula marismortui (strain ATCC 43049 / DSM 3752 / JCM 8966 / VKM B-1809) (Halobacterium marismortui).